An 853-amino-acid polypeptide reads, in one-letter code: DNA mismatch repair protein MutS (853 aa).

An ATP-binding site is contributed by 614 to 621; sequence GPNMGGKS.

The protein belongs to the DNA mismatch repair MutS family.

This protein is involved in the repair of mismatches in DNA. It is possible that it carries out the mismatch recognition step. This protein has a weak ATPase activity. This is DNA mismatch repair protein MutS from Escherichia coli O6:K15:H31 (strain 536 / UPEC).